A 462-amino-acid chain; its full sequence is Argininosuccinate lyase (462 aa).

The protein belongs to the lyase 1 family. Argininosuccinate lyase subfamily.

Its subcellular location is the cytoplasm. It carries out the reaction 2-(N(omega)-L-arginino)succinate = fumarate + L-arginine. The protein operates within amino-acid biosynthesis; L-arginine biosynthesis; L-arginine from L-ornithine and carbamoyl phosphate: step 3/3. This Chloroflexus aggregans (strain MD-66 / DSM 9485) protein is Argininosuccinate lyase.